A 490-amino-acid polypeptide reads, in one-letter code: MKPKLMYQELKVPAEEPASELPMNEIEAWKAAEKKARWVLLVLILAVVGFGALMTQLFLWEYGDLHLFGPNQRPAPCYDPCEAVLVESIPEGLDFPNASTSNPSTSQAWLGLLAGAHSSLDIASFYWTLTNNDTHTQEASAQQGEEVLRQLQTLAPRGVKVRIAVSKPNGPQPQADLQALLQSGAQVRMVDMQKLTHGVLHTKFWVVDQTHFYLGSANMDWRSLTQVKELGVVMYNCSCLARDLTKIFEAYWFLGQAGSSIPSTWPRPYDTRYNQETPMEICLNGTPALAYLASAPPPLCPSGRTPDLKALLNVVDNARSFIYIAVMNYLPIMEFSHPRRFWPAIDDGLRRAAYERGVKVRLLISCWGHSDPSMRAFLLSLAALRDNHTHSDIQVKLFVVPADDAQARIPYARVNHNKYMVTERATYIGTSNWSGSYFTETAGTSLLVTQNGRGGLRSQLEAVFLRDWDSPYSHDLDAAADSVGNACRLL.

The Cytoplasmic portion of the chain corresponds to 1–38 (MKPKLMYQELKVPAEEPASELPMNEIEAWKAAEKKARW). The helical; Signal-anchor for type II membrane protein transmembrane segment at 39-59 (VLLVLILAVVGFGALMTQLFL) threads the bilayer. Topologically, residues 60–490 (WEYGDLHLFG…DSVGNACRLL (431 aa)) are lumenal. Cystine bridges form between C77–C239 and C81–C237. N-linked (GlcNAc...) asparagine glycans are attached at residues N97 and N132. Residues 196-223 (THGVLHTKFWVVDQTHFYLGSANMDWRS) enclose the PLD phosphodiesterase 1 domain. Catalysis depends on residues H201, K203, and D208. H201 (proton donor) is an active-site residue. H201 and K203 together coordinate phosphate. N218 provides a ligand contact to phosphate. 3 N-linked (GlcNAc...) asparagine glycosylation sites follow: N236, N284, and N387. A disulfide bridge links C366 with C487. Residues 411-437 (YARVNHNKYMVTERATYIGTSNWSGSY) form the PLD phosphodiesterase 2 domain. H416 contributes to the phosphate binding site. H416 functions as the Nucleophile in the catalytic mechanism. F438 lines the Mg(2+) pocket.

The protein belongs to the phospholipase D family. Homodimer. Interacts with APP. In terms of processing, N-glycosylated. Proteolytically processed to a soluble form that is stable within endosomes and lysosomes. During transport through the secretory pathway becomes proteolysed by cysteine proteases, thereby releasing a stable soluble lysosomal lumenal polypeptide, whereas the transmembrane-bound fragment is rapidly degraded. Its transport route to lysosomes involves ubiquitination and the ESCRT complex. Post-translationally, ubiquitinated. Ubiquitination mediates sorting into lysosomes.

The protein localises to the endoplasmic reticulum membrane. It is found in the lysosome lumen. Its subcellular location is the early endosome membrane. The protein resides in the late endosome membrane. It localises to the golgi apparatus membrane. The protein localises to the endosome membrane. It catalyses the reaction Exonucleolytic cleavage in the 5'- to 3'-direction to yield nucleoside 3'-phosphates.. The catalysed reaction is a 5'-end 5'-dephospho-ribonucleotidyl-ribonucleotide-RNA + H2O = a ribonucleoside 3'-phosphate + a 5'-end dephospho-ribonucleoside-RNA + H(+). It carries out the reaction a ribonucleoside 3'-phosphate-2'-3'-cyclophospho-GMP + H2O = a ribonucleoside 3'-phosphate + 2',3'-cyclophospho-GMP + H(+). The enzyme catalyses a 5'-end 5'-dephospho-2'-deoxyribonucleotidyl-2'-deoxyribonucleotide in single-stranded DNA + H2O = a 5'-end dephospho-2'-deoxyribonucleoside in single-stranded DNA + a 2'-deoxyribonucleoside 3'-phosphate + H(+). It catalyses the reaction a 5'-end 5'-phospho-2'-deoxyribonucleotide in single-stranded DNA + H2O = a 5'-end 5'-dephospho-2'-deoxyribonucleotide in single-stranded DNA + phosphate. The catalysed reaction is a 3-lyso-sn-glycero-1-phospho-(3'-acyl-1'-sn-glycerol) + a 1-acyl-sn-glycerol = a 3-acyl-sn-glycero-1-phospho-(3'-acyl-1'-sn-glycerol) + glycerol. It carries out the reaction 3-lyso-sn-glycero-1-phospho-(3'-(9Z-octadecenoyl)-1'-sn-glycerol) + 1-(9Z-octadecenoyl)-sn-glycerol = 3-(9Z-octadecenoyl)-sn-glycero-1-phospho-(3'-(9Z-octadecenoyl)-1'-sn-glycerol) + glycerol. Its function is as follows. 5'-&gt;3' exonuclease that hydrolyzes the phosphodiester bond of single-stranded DNA (ssDNA) and RNA molecules to form nucleoside 3'-monophosphates and 5'-end 5'-hydroxy deoxyribonucleotide/ribonucleotide fragments. Partially redundant with PLD4, can cleave all four nucleotides displaying higher efficiency for ssDNA and RNA fragments initiated with uridine and guanosine residues and lower efficiency for cytidine-initiated substrates. As a result, it does not always degrade polynucleotides to the single nucleotide level, it can stall at specific sites sparing certain fragments from exonucleolytic degradation. Processes self and pathogenic ssDNA and RNA molecules that reach the endolysosomal compartment via phagocytosis or autophagy and may serve as 'danger' signals for recognition by innate immune receptors such as toll-like receptors (TLRs). Degrades mitochondrial CpG-rich ssDNA fragments to prevent TLR9 activation and autoinflammatory response, but it can cleave viral RNA to generate ligands for TLR7 activation and initiate antiviral immune responses. In plasmacytoid dendritic cells, it cooperates with endonuclease RNASET2 to release 2',3'-cyclic guanosine monophosphate (2',3'-cGMP), a potent stimulatory ligand for TLR7. Produces 2',3'-cGMPs and cytidine-rich RNA fragments that occupy TLR7 ligand-binding pockets and trigger a signaling-competent state. Can exert polynucleotide phosphatase activity toward 5'-phosphorylated ssDNA substrates although at a slow rate. Transphosphatidylase that catalyzes the exchange with R to S stereo-inversion of the glycerol moiety between (S,R)-lysophosphatidylglycerol (LPG) and monoacylglycerol (MAG) substrates to yield (S,S)-bis(monoacylglycero)phosphate (BMP). Can synthesize a variety of (S,S)-BMPs representing the main phospholipid constituent of lysosomal intralumenal vesicle (ILV) membranes that bind acid hydrolases for lipid degradation. Regulates the homeostasis and interorganellar communication of the endolysosomal system with an overall impact on cellular removal of dysfunctional organelles via autophagy as well as proper protein and lipid turnover. May play a role in myotube formation in response to ER stress. The polypeptide is 5'-3' exonuclease PLD3 (PLD3) (Bos taurus (Bovine)).